Reading from the N-terminus, the 298-residue chain is NADH-cytochrome b5 reductase 2 (298 aa).

Residues 15–38 (FVLPVAAAAVGLASYSFTSSSFIA) traverse the membrane as a helical segment. In terms of domain architecture, FAD-binding FR-type spans 49–153 (DEWIDLKLIS…KGPFVKWKWE (105 aa)). Residue 156–191 (QFKSIALIGGGTGITPLYQLIHEITKNPADKTQVSL) coordinates FAD.

The protein belongs to the flavoprotein pyridine nucleotide cytochrome reductase family. The cofactor is FAD.

The protein localises to the mitochondrion outer membrane. It carries out the reaction 2 Fe(III)-[cytochrome b5] + NADH = 2 Fe(II)-[cytochrome b5] + NAD(+) + H(+). Functionally, may mediate the reduction of outer membrane cytochrome b5. This is NADH-cytochrome b5 reductase 2 (MCR1) from Scheffersomyces stipitis (strain ATCC 58785 / CBS 6054 / NBRC 10063 / NRRL Y-11545) (Yeast).